We begin with the raw amino-acid sequence, 194 residues long: Putative lipoprotein LppK (194 aa).

A signal peptide spans M1–G26. C27 is lipidated: N-palmitoyl cysteine. Residue C27 is the site of S-diacylglycerol cysteine attachment. Residues G174–H194 are disordered. Residues I185–H194 show a composition bias toward pro residues.

It belongs to the MTB12 family.

The protein localises to the cell membrane. The chain is Putative lipoprotein LppK (lppK) from Mycobacterium leprae (strain TN).